Reading from the N-terminus, the 237-residue chain is Demethylmenaquinone methyltransferase (237 aa).

S-adenosyl-L-methionine is bound by residues Thr58, Asp79, and 106–107 (NA).

Belongs to the class I-like SAM-binding methyltransferase superfamily. MenG/UbiE family.

The enzyme catalyses a 2-demethylmenaquinol + S-adenosyl-L-methionine = a menaquinol + S-adenosyl-L-homocysteine + H(+). It functions in the pathway quinol/quinone metabolism; menaquinone biosynthesis; menaquinol from 1,4-dihydroxy-2-naphthoate: step 2/2. Functionally, methyltransferase required for the conversion of demethylmenaquinol (DMKH2) to menaquinol (MKH2). This Bacillus cytotoxicus (strain DSM 22905 / CIP 110041 / 391-98 / NVH 391-98) protein is Demethylmenaquinone methyltransferase.